The primary structure comprises 321 residues: Fe-S cluster assembly protein DRE2 (321 aa).

Positions Met-1–Glu-140 are N-terminal SAM-like domain. The segment covering Ile-128–Val-138 has biased composition (polar residues). The disordered stretch occupies residues Ile-128 to Gln-166. A linker region spans residues Glu-140–Glu-177. [2Fe-2S] cluster-binding residues include Cys-202, Cys-217, Cys-220, and Cys-222. The segment at Cys-202–Cys-222 is fe-S binding site A. The tract at residues Gln-239–Asn-263 is disordered. The [4Fe-4S] cluster site is built by Cys-283, Cys-286, Cys-294, and Cys-297. 2 short sequence motifs (cx2C motif) span residues Cys-283 to Cys-286 and Cys-294 to Cys-297. Positions Cys-283–Cys-297 are fe-S binding site B.

This sequence belongs to the anamorsin family. Monomer. Interacts with TAH18. Interacts with MIA40. [2Fe-2S] cluster is required as a cofactor. [4Fe-4S] cluster serves as cofactor.

It localises to the cytoplasm. It is found in the mitochondrion intermembrane space. Component of the cytosolic iron-sulfur (Fe-S) protein assembly (CIA) machinery required for the maturation of extramitochondrial Fe-S proteins. Part of an electron transfer chain functioning in an early step of cytosolic Fe-S biogenesis, facilitating the de novo assembly of a [4Fe-4S] cluster on the scaffold complex CFD1-NBP35. Electrons are transferred to DRE2 from NADPH via the FAD- and FMN-containing protein TAH18. TAH18-DRE2 are also required for the assembly of the diferric tyrosyl radical cofactor of ribonucleotide reductase (RNR), probably by providing electrons for reduction during radical cofactor maturation in the catalytic small subunit RNR2. The chain is Fe-S cluster assembly protein DRE2 from Malassezia globosa (strain ATCC MYA-4612 / CBS 7966) (Dandruff-associated fungus).